Reading from the N-terminus, the 512-residue chain is Kelch repeat protein C2 (512 aa).

A BTB domain is found at 2–67 (ESVIFSINGE…IRWKKINITI (66 aa)). The region spanning 102-176 (CIRMFNFSKR…LLKWIHKNPN (75 aa)) is the BACK domain. 6 Kelch repeats span residues 216–261 (IKHN…LHNC), 262–307 (LYII…VNDG), 309–354 (LYVI…FVND), 356–403 (IYVM…EYDG), 405–449 (IYVI…SCGD), and 452–498 (LIIA…THKS).

Belongs to the poxviruses Kelch family.

In Vaccinia virus (strain Western Reserve) (VACV), this protein is Kelch repeat protein C2.